Consider the following 311-residue polypeptide: 1D-myo-inositol 2-acetamido-2-deoxy-alpha-D-glucopyranoside deacetylase (311 aa).

3 residues coordinate Zn(2+): histidine 29, aspartate 32, and histidine 162.

This sequence belongs to the MshB deacetylase family. Zn(2+) is required as a cofactor.

It carries out the reaction 1D-myo-inositol 2-acetamido-2-deoxy-alpha-D-glucopyranoside + H2O = 1D-myo-inositol 2-amino-2-deoxy-alpha-D-glucopyranoside + acetate. Catalyzes the deacetylation of 1D-myo-inositol 2-acetamido-2-deoxy-alpha-D-glucopyranoside (GlcNAc-Ins) in the mycothiol biosynthesis pathway. This chain is 1D-myo-inositol 2-acetamido-2-deoxy-alpha-D-glucopyranoside deacetylase, found in Corynebacterium efficiens (strain DSM 44549 / YS-314 / AJ 12310 / JCM 11189 / NBRC 100395).